Consider the following 993-residue polypeptide: Protein translocase subunit SecA (993 aa).

Residues glutamine 102, 120-124 (GEGKT), and aspartate 523 each bind ATP. The tract at residues 910-962 (ENAPEPQISGGNGQQPPQRRQQTSLDDLEKQFERKKKRELEQARMAGGGMPDA) is disordered. The segment covering 936–951 (DLEKQFERKKKRELEQ) has biased composition (basic and acidic residues). The Zn(2+) site is built by cysteine 979, cysteine 981, cysteine 990, and histidine 991.

It belongs to the SecA family. Monomer and homodimer. Part of the essential Sec protein translocation apparatus which comprises SecA, SecYEG and auxiliary proteins SecDF. Other proteins may also be involved. The cofactor is Zn(2+).

It localises to the cell inner membrane. Its subcellular location is the cytoplasm. The enzyme catalyses ATP + H2O + cellular proteinSide 1 = ADP + phosphate + cellular proteinSide 2.. In terms of biological role, part of the Sec protein translocase complex. Interacts with the SecYEG preprotein conducting channel. Has a central role in coupling the hydrolysis of ATP to the transfer of proteins into and across the cell membrane, serving as an ATP-driven molecular motor driving the stepwise translocation of polypeptide chains across the membrane. The polypeptide is Protein translocase subunit SecA (Koribacter versatilis (strain Ellin345)).